Consider the following 294-residue polypeptide: Shikimate kinase (294 aa).

Residue 87–97 coordinates ATP; sequence PLAGGLKSSSA.

The protein belongs to the GHMP kinase family. Archaeal shikimate kinase subfamily.

It localises to the cytoplasm. It carries out the reaction shikimate + ATP = 3-phosphoshikimate + ADP + H(+). It participates in metabolic intermediate biosynthesis; chorismate biosynthesis; chorismate from D-erythrose 4-phosphate and phosphoenolpyruvate: step 5/7. The protein is Shikimate kinase (aroK) of Methanosarcina acetivorans (strain ATCC 35395 / DSM 2834 / JCM 12185 / C2A).